The following is a 545-amino-acid chain: Chaperonin GroEL (545 aa).

ATP is bound by residues 30 to 33 (TLGP), K51, 87 to 91 (DGTTT), G415, and D495.

It belongs to the chaperonin (HSP60) family. In terms of assembly, forms a cylinder of 14 subunits composed of two heptameric rings stacked back-to-back. Interacts with the co-chaperonin GroES.

It localises to the cytoplasm. The enzyme catalyses ATP + H2O + a folded polypeptide = ADP + phosphate + an unfolded polypeptide.. Together with its co-chaperonin GroES, plays an essential role in assisting protein folding. The GroEL-GroES system forms a nano-cage that allows encapsulation of the non-native substrate proteins and provides a physical environment optimized to promote and accelerate protein folding. The sequence is that of Chaperonin GroEL from Shewanella putrefaciens (strain CN-32 / ATCC BAA-453).